The following is a 136-amino-acid chain: Small ribosomal subunit protein bS16 (136 aa).

The protein belongs to the bacterial ribosomal protein bS16 family.

This Pseudarthrobacter chlorophenolicus (strain ATCC 700700 / DSM 12829 / CIP 107037 / JCM 12360 / KCTC 9906 / NCIMB 13794 / A6) (Arthrobacter chlorophenolicus) protein is Small ribosomal subunit protein bS16.